A 465-amino-acid chain; its full sequence is Probable tRNA modification GTPase MnmE (465 aa).

Arg-23, Glu-85, and Arg-124 together coordinate (6S)-5-formyl-5,6,7,8-tetrahydrofolate. One can recognise a TrmE-type G domain in the interval 221–384; sequence GTKVCIIGKP…LNNCILDLSS (164 aa). GTP is bound by residues 231-236, 250-256, and 275-278; these read NVGKSS, TNFPGTT, and DTAG. Residues Ser-235 and Thr-256 each coordinate Mg(2+). Lys-465 is a binding site for (6S)-5-formyl-5,6,7,8-tetrahydrofolate.

It belongs to the TRAFAC class TrmE-Era-EngA-EngB-Septin-like GTPase superfamily. TrmE GTPase family. K(+) is required as a cofactor.

It is found in the plastid. It localises to the chloroplast. Exhibits a very high intrinsic GTPase hydrolysis rate. Involved in the addition of a carboxymethylaminomethyl (cmnm) group at the wobble position (U34) of certain tRNAs, forming tRNA-cmnm(5)s(2)U34. The polypeptide is Probable tRNA modification GTPase MnmE (Cyanidium caldarium (Red alga)).